Here is a 100-residue protein sequence, read N- to C-terminus: Suppressor of silencing 2b (100 aa).

The Nuclear localization signal signature appears at 22–27 (KRRRRR).

It belongs to the cucumovirus/ilarvirus protein 2b family. In terms of assembly, homotetramer. Interacts with host AGO1; this interaction blocks AGO1 cleavage activity to attenuate RNA silencing and thus counter host defense. Interacts with host JAZ.

Its subcellular location is the host nucleus. Multifunctional protein that plays two independent roles: viral suppressor of host RNAi (VSR) and viral inducer of host attractiveness to insect vectors (VIA). Acts as a suppressor of RNA-mediated gene silencing, also known as post-transcriptional gene silencing (PTGS), a mechanism of plant viral defense that limits the accumulation of viral RNAs. May directly interfere with mobile silencing signaling. Also inhibits signal transduction by the phytohormone jasmonate, making the infected plant more attractive to aphids, which are the second host to play a role as a dissemination vector. Acts by binding to and inhibiting JAZ degradation in the host. The protein is Suppressor of silencing 2b of Cucumis sativus (Cucumber).